Here is a 398-residue protein sequence, read N- to C-terminus: Stabilizer of axonemal microtubules 2 (398 aa).

Mn stretches follow at residues 114-126, 148-162, 248-260, 282-296, 316-328, and 350-364; these read STTF…PQEI, ITSH…QLEL, NSTS…PYQA, KSIM…ESCR, LSTF…PHEL, and VTMY…RQEI.

The protein belongs to the FAM154 family.

The chain is Stabilizer of axonemal microtubules 2 (SAXO2) from Homo sapiens (Human).